Here is a 592-residue protein sequence, read N- to C-terminus: Potassium-transporting ATPase potassium-binding subunit (592 aa).

Helical transmembrane passes span 7–27, 60–80, 132–152, 175–195, 279–299, 310–330, 409–429, 449–469, 513–533, and 556–576; these read ILLG…GTYI, LKYA…VYAL, ALAV…IALI, LHVL…QGVI, LSNF…CFTF, WAVL…AMHF, GLYG…LMIG, IAIL…VMLA, VMLG…VLAI, and LFVT…YVPA.

This sequence belongs to the KdpA family. In terms of assembly, the system is composed of three essential subunits: KdpA, KdpB and KdpC.

The protein localises to the cell inner membrane. Part of the high-affinity ATP-driven potassium transport (or Kdp) system, which catalyzes the hydrolysis of ATP coupled with the electrogenic transport of potassium into the cytoplasm. This subunit binds the periplasmic potassium ions and delivers the ions to the membrane domain of KdpB through an intramembrane tunnel. The polypeptide is Potassium-transporting ATPase potassium-binding subunit (Dechloromonas aromatica (strain RCB)).